The following is a 492-amino-acid chain: Aspartate aminotransferase (492 aa).

A chloroplast-targeting transit peptide spans 1–66 (MMSASFKCPV…KGSCCLFNIR (66 aa)). L-aspartate contacts are provided by glycine 119, tryptophan 206, and asparagine 256. Residue lysine 319 is modified to N6-(pyridoxal phosphate)lysine. Residue arginine 458 coordinates L-aspartate.

Belongs to the class-I pyridoxal-phosphate-dependent aminotransferase family. Homodimer. It depends on pyridoxal 5'-phosphate as a cofactor.

It localises to the plastid. Its subcellular location is the chloroplast. It carries out the reaction L-aspartate + 2-oxoglutarate = oxaloacetate + L-glutamate. Prokaryotic-type aspartate aminotransferase. Specific for aspartate and no activity with glutamine, asparagine, alanine, histidine, leucine, methionine, lysine, arginine, tryptophan, tyrosine, phenylalanine or kynurenine. The sequence is that of Aspartate aminotransferase (AAT) from Pinus pinaster (Maritime pine).